A 195-amino-acid polypeptide reads, in one-letter code: MSRLLVLKSSILGDYSQSNKLVDEFINHFDQQQIVVRDLAQQPLPVLDFQVATALRAAGELTAEQQAIVTLSDTLIDEIKAADTLVIAAPMYNFTIPTQLKNWIDLIARAGVTFTYTEQGPKGLIEGKKAVIVTTRGGIHKDAASDIITPYLKTVLGFVGITEVEFVYAEALNMGDDFANKGLASASEHLAALTA.

FMN contacts are provided by residues serine 10, 16 to 18 (SQS), 91 to 94 (MYNF), and 135 to 138 (TRGG).

It belongs to the azoreductase type 1 family. In terms of assembly, homodimer. Requires FMN as cofactor.

The enzyme catalyses 2 a quinone + NADH + H(+) = 2 a 1,4-benzosemiquinone + NAD(+). It catalyses the reaction N,N-dimethyl-1,4-phenylenediamine + anthranilate + 2 NAD(+) = 2-(4-dimethylaminophenyl)diazenylbenzoate + 2 NADH + 2 H(+). In terms of biological role, quinone reductase that provides resistance to thiol-specific stress caused by electrophilic quinones. Its function is as follows. Also exhibits azoreductase activity. Catalyzes the reductive cleavage of the azo bond in aromatic azo compounds to the corresponding amines. The sequence is that of FMN-dependent NADH:quinone oxidoreductase from Vibrio vulnificus (strain YJ016).